Consider the following 740-residue polypeptide: Ribosomal protein S6 kinase alpha-3 (740 aa).

Residues 1–38 are disordered; the sequence is MPLAQLADPWQKMAVESPSDSAENGQQIMDEPMGEEEI. The span at 18-27 shows a compositional bias: polar residues; the sequence is PSDSAENGQQ. Residues 68–327 enclose the Protein kinase 1 domain; that stretch reads FELLKVLGQG…VEEIKRHSFF (260 aa). Residues 74 to 82 and K100 each bind ATP; that span reads LGQGSFGKV. D193 serves as the catalytic Proton acceptor. At S227 the chain carries Phosphoserine; by PDPK1. In terms of domain architecture, AGC-kinase C-terminal spans 328 to 397; the sequence is STIDWNKLYR…VAITSDDESQ (70 aa). T365 bears the Phosphothreonine mark. 2 positions are modified to phosphoserine: S369 and S375. At S386 the chain carries Phosphoserine; by autocatalysis and MAPKAPK2. Phosphoserine is present on S415. The Protein kinase 2 domain occupies 422–679; the sequence is YEVKEDIGVG…AALVLRHPWI (258 aa). ATP is bound by residues 428 to 436 and K451; that span reads IGVGSYSVC. Position 529 is a phosphotyrosine; by FGFR3 (Y529). D539 functions as the Proton acceptor in the catalytic mechanism. Phosphoserine occurs at positions 556 and 715.

It belongs to the protein kinase superfamily. AGC Ser/Thr protein kinase family. S6 kinase subfamily. As to quaternary structure, forms a complex with either MAPK1/ERK2 or MAPK3/ERK1 in quiescent cells. Transiently dissociates following mitogenic stimulation. Interacts with NFATC4, ETV1/ER81 and FGFR1. The cofactor is Mg(2+). Activated by phosphorylation at Ser-227 by PDPK1. Autophosphorylated on Ser-386, as part of the activation process. May be phosphorylated at Thr-365 and Ser-369 by MAPK1/ERK2 and MAPK3/ERK1. Can also be activated via phosphorylation at Ser-386 by MAPKAPK2. In terms of processing, N-terminal myristoylation results in an activated kinase in the absence of added growth factors. In terms of tissue distribution, expressed in many tissues, highest levels in skeletal muscle.

Its subcellular location is the nucleus. The protein localises to the cytoplasm. The enzyme catalyses L-seryl-[protein] + ATP = O-phospho-L-seryl-[protein] + ADP + H(+). It carries out the reaction L-threonyl-[protein] + ATP = O-phospho-L-threonyl-[protein] + ADP + H(+). Upon extracellular signal or mitogen stimulation, phosphorylated at Thr-577 in the C-terminal kinase domain (CTKD) by MAPK1/ERK2 and MAPK3/ERK1. The activated CTKD then autophosphorylates Ser-386, allowing binding of PDPK1, which in turn phosphorylates Ser-227 in the N-terminal kinase domain (NTDK) leading to the full activation of the protein and subsequent phosphorylation of the substrates by the NTKD. In terms of biological role, serine/threonine-protein kinase that acts downstream of ERK (MAPK1/ERK2 and MAPK3/ERK1) signaling and mediates mitogenic and stress-induced activation of the transcription factors CREB1, ETV1/ER81 and NR4A1/NUR77, regulates translation through RPS6 and EIF4B phosphorylation, and mediates cellular proliferation, survival, and differentiation by modulating mTOR signaling and repressing pro-apoptotic function of BAD and DAPK1. In fibroblast, is required for EGF-stimulated phosphorylation of CREB1 and histone H3 at 'Ser-10', which results in the subsequent transcriptional activation of several immediate-early genes. In response to mitogenic stimulation (EGF and PMA), phosphorylates and activates NR4A1/NUR77 and ETV1/ER81 transcription factors and the cofactor CREBBP. Upon insulin-derived signal, acts indirectly on the transcription regulation of several genes by phosphorylating GSK3B at 'Ser-9' and inhibiting its activity. Phosphorylates RPS6 in response to serum or EGF via an mTOR-independent mechanism and promotes translation initiation by facilitating assembly of the preinitiation complex. In response to insulin, phosphorylates EIF4B, enhancing EIF4B affinity for the EIF3 complex and stimulating cap-dependent translation. Is involved in the mTOR nutrient-sensing pathway by directly phosphorylating TSC2 at 'Ser-1798', which potently inhibits TSC2 ability to suppress mTOR signaling, and mediates phosphorylation of RPTOR, which regulates mTORC1 activity and may promote rapamycin-sensitive signaling independently of the PI3K/AKT pathway. Mediates cell survival by phosphorylating the pro-apoptotic proteins BAD and DAPK1 and suppressing their pro-apoptotic function. Promotes the survival of hepatic stellate cells by phosphorylating CEBPB in response to the hepatotoxin carbon tetrachloride (CCl4). Is involved in cell cycle regulation by phosphorylating the CDK inhibitor CDKN1B, which promotes CDKN1B association with 14-3-3 proteins and prevents its translocation to the nucleus and inhibition of G1 progression. In LPS-stimulated dendritic cells, is involved in TLR4-induced macropinocytosis, and in myeloma cells, acts as effector of FGFR3-mediated transformation signaling, after direct phosphorylation at Tyr-529 by FGFR3. Negatively regulates EGF-induced MAPK1/3 phosphorylation via phosphorylation of SOS1. Phosphorylates SOS1 at 'Ser-1134' and 'Ser-1161' that create YWHAB and YWHAE binding sites and which contribute to the negative regulation of MAPK1/3 phosphorylation. Phosphorylates EPHA2 at 'Ser-897', the RPS6KA-EPHA2 signaling pathway controls cell migration. Acts as a regulator of osteoblast differentiation by mediating phosphorylation of ATF4, thereby promoting ATF4 transactivation activity. This chain is Ribosomal protein S6 kinase alpha-3 (RPS6KA3), found in Homo sapiens (Human).